A 101-amino-acid polypeptide reads, in one-letter code: Aspartyl/glutamyl-tRNA(Asn/Gln) amidotransferase subunit C (101 aa).

Residues Q75–S101 form a disordered region. Positions E85–S101 are enriched in basic and acidic residues.

Belongs to the GatC family. As to quaternary structure, heterotrimer of A, B and C subunits.

It carries out the reaction L-glutamyl-tRNA(Gln) + L-glutamine + ATP + H2O = L-glutaminyl-tRNA(Gln) + L-glutamate + ADP + phosphate + H(+). It catalyses the reaction L-aspartyl-tRNA(Asn) + L-glutamine + ATP + H2O = L-asparaginyl-tRNA(Asn) + L-glutamate + ADP + phosphate + 2 H(+). Allows the formation of correctly charged Asn-tRNA(Asn) or Gln-tRNA(Gln) through the transamidation of misacylated Asp-tRNA(Asn) or Glu-tRNA(Gln) in organisms which lack either or both of asparaginyl-tRNA or glutaminyl-tRNA synthetases. The reaction takes place in the presence of glutamine and ATP through an activated phospho-Asp-tRNA(Asn) or phospho-Glu-tRNA(Gln). This chain is Aspartyl/glutamyl-tRNA(Asn/Gln) amidotransferase subunit C, found in Salinispora arenicola (strain CNS-205).